We begin with the raw amino-acid sequence, 472 residues long: Trigger factor (472 aa).

In terms of domain architecture, PPIase FKBP-type spans 174–261; that stretch reads GDIAVLGFKG…LKDLKTRELP (88 aa). The segment at 430 to 472 is disordered; it reads ENSTLTEQAPAADDADDAEKPAAKKKPAAKKKTPAKSKTDAEA. A compositionally biased stretch (basic residues) spans 452–464; sequence AKKKPAAKKKTPA.

Belongs to the FKBP-type PPIase family. Tig subfamily.

The protein resides in the cytoplasm. It carries out the reaction [protein]-peptidylproline (omega=180) = [protein]-peptidylproline (omega=0). Its function is as follows. Involved in protein export. Acts as a chaperone by maintaining the newly synthesized protein in an open conformation. Functions as a peptidyl-prolyl cis-trans isomerase. The sequence is that of Trigger factor from Parasynechococcus marenigrum (strain WH8102).